Consider the following 429-residue polypeptide: Transcriptional coactivator AacuS (429 aa).

The HTH iclR-type domain maps to 80–144 (MASQTQLLAC…GFLQEPELGH (65 aa)). A DNA-binding region (H-T-H motif) is located at residues 110–129 (IKDVAELIGVPENHICRIVR).

The protein localises to the nucleus. In terms of biological role, transcriptional coactivator; part of the gene cluster that mediates the biosynthesis of the tetrahydroxanthone dimer secalonic acid D. This chain is Transcriptional coactivator AacuS, found in Aspergillus aculeatus (strain ATCC 16872 / CBS 172.66 / WB 5094).